The following is a 335-amino-acid chain: Solute-binding protein Veis_3954 (335 aa).

The signal sequence occupies residues 1–34 (MPSTRPLPRPSSRSLRRLALGLGLAFGLGATAAA). (R)-pantoate is bound by residues glutamine 50, glutamate 82, 155–158 (NGFR), arginine 179, and asparagine 219.

This sequence belongs to the bacterial solute-binding protein 7 family. In terms of assembly, the complex is comprised of an extracytoplasmic solute-binding protein and a heteromeric permease formed by two transmembrane proteins.

It is found in the periplasm. Solute-binding protein that binds (R)-pantoate and D-erythronate (in vitro). Probably part of a tripartite ATP-independent periplasmic (TRAP) transport system that mediates solute transport into the cytoplasm. This is Solute-binding protein Veis_3954 from Verminephrobacter eiseniae (strain EF01-2).